The chain runs to 355 residues: Probable butyrate kinase (355 aa).

This sequence belongs to the acetokinase family.

It is found in the cytoplasm. The enzyme catalyses butanoate + ATP = butanoyl phosphate + ADP. The sequence is that of Probable butyrate kinase from Listeria monocytogenes serotype 4b (strain CLIP80459).